We begin with the raw amino-acid sequence, 479 residues long: Muscarinic acetylcholine receptor M4 (479 aa).

At 1 to 30 (MANFTPVNGSSANQSVRLVTTAHNHLETVE) the chain is on the extracellular side. 2 N-linked (GlcNAc...) asparagine glycosylation sites follow: asparagine 8 and asparagine 13. The chain crosses the membrane as a helical span at residues 31-53 (MVFIATVTGSLSLVTVVGNILVM). Residues 54-67 (LSIKVNRQLQTVNN) lie on the Cytoplasmic side of the membrane. A helical membrane pass occupies residues 68 to 88 (YFLFSLACADLIIGAFSMNLY). At 89-105 (TLYIIKGYWPLGAVVCD) the chain is on the extracellular side. The cysteines at positions 104 and 184 are disulfide-linked. The helical transmembrane segment at 106-127 (LWLALDYVVSNASVMNLLIISF) threads the bilayer. The Cytoplasmic segment spans residues 128-147 (DRYFCVTKPLTYPARRTTKM). Residues 148–170 (AGLMIAAAWVLSFVLWAPAILFW) traverse the membrane as a helical segment. Residues 171–192 (QFVVGKRTVPDNQCFIQFLSNP) are Extracellular-facing. Residues 193-215 (AVTFGTAIAAFYLPVVIMTVLYI) traverse the membrane as a helical segment. Residues 216–401 (HISLASRSRV…AARERKVTRT (186 aa)) lie on the Cytoplasmic side of the membrane. Residues 271-334 (LEEAPPPALP…APTLQPRTLN (64 aa)) form a disordered region. Over residues 274–285 (APPPALPPPPRP) the composition is skewed to pro residues. The segment covering 293–303 (NESSSGSATQN) has biased composition (polar residues). A compositionally biased stretch (low complexity) spans 310 to 333 (TELSTTEAATTPALPAPTLQPRTL). Residues 402–422 (IFAILLAFILTWTPYNVMVLV) traverse the membrane as a helical segment. Topologically, residues 423 to 436 (NTFCQSCIPERVWS) are extracellular. The helical transmembrane segment at 437 to 456 (IGYWLCYVNSTINPACYALC) threads the bilayer. Over 457–479 (NATFKKTFRHLLLCQYRNIGTAR) the chain is Cytoplasmic. 3 positions are modified to phosphothreonine: threonine 459, threonine 463, and threonine 477.

This sequence belongs to the G-protein coupled receptor 1 family. Muscarinic acetylcholine receptor subfamily. CHRM4 sub-subfamily.

It localises to the cell membrane. The protein localises to the postsynaptic cell membrane. In terms of biological role, the muscarinic acetylcholine receptor mediates various cellular responses, including inhibition of adenylate cyclase, breakdown of phosphoinositides and modulation of potassium channels through the action of G proteins. Primary transducing effect is inhibition of adenylate cyclase. In Mus musculus (Mouse), this protein is Muscarinic acetylcholine receptor M4 (Chrm4).